Here is a 245-residue protein sequence, read N- to C-terminus: Phosphoribosylaminoimidazole-succinocarboxamide synthase (245 aa).

The protein belongs to the SAICAR synthetase family.

The catalysed reaction is 5-amino-1-(5-phospho-D-ribosyl)imidazole-4-carboxylate + L-aspartate + ATP = (2S)-2-[5-amino-1-(5-phospho-beta-D-ribosyl)imidazole-4-carboxamido]succinate + ADP + phosphate + 2 H(+). The protein operates within purine metabolism; IMP biosynthesis via de novo pathway; 5-amino-1-(5-phospho-D-ribosyl)imidazole-4-carboxamide from 5-amino-1-(5-phospho-D-ribosyl)imidazole-4-carboxylate: step 1/2. This chain is Phosphoribosylaminoimidazole-succinocarboxamide synthase, found in Acaryochloris marina (strain MBIC 11017).